A 91-amino-acid chain; its full sequence is Probable Fe(2+)-trafficking protein (91 aa).

This sequence belongs to the Fe(2+)-trafficking protein family.

Could be a mediator in iron transactions between iron acquisition and iron-requiring processes, such as synthesis and/or repair of Fe-S clusters in biosynthetic enzymes. This chain is Probable Fe(2+)-trafficking protein, found in Burkholderia ambifaria (strain MC40-6).